The chain runs to 208 residues: Adenylyl-sulfate kinase 3 (208 aa).

37-45 provides a ligand contact to ATP; it reads GLSGSGKST. Residues Asp67, Arg70, Arg84, Asn87, 110–111, and Gly160 contribute to the substrate site; that span reads IS. The active-site Phosphoserine intermediate is Ser111.

Belongs to the APS kinase family. In terms of tissue distribution, expressed in root vasculature, root tips, leaf epidermal and guard cells, pollen grains and radicle of immature seeds.

Its subcellular location is the cytoplasm. The protein resides in the cytosol. The enzyme catalyses adenosine 5'-phosphosulfate + ATP = 3'-phosphoadenylyl sulfate + ADP + H(+). The protein operates within sulfur metabolism; hydrogen sulfide biosynthesis; sulfite from sulfate: step 2/3. In terms of biological role, catalyzes the synthesis of activated sulfate for the sulfation of secondary metabolites, including the glucosinolates. Essential for plant reproduction and viability. This Arabidopsis thaliana (Mouse-ear cress) protein is Adenylyl-sulfate kinase 3.